The chain runs to 194 residues: Holliday junction branch migration complex subunit RuvA (194 aa).

Residues 1–64 are domain I; the sequence is MIGRLRGILA…EDSVSLYGFL (64 aa). The interval 65–140 is domain II; it reads REGERRLFRD…RAADFSSGAP (76 aa). The flexible linker stretch occupies residues 140–144; that stretch reads PITGQ. Residues 145–194 form a domain III region; it reads LGPDAVSEATVALQQLGYKPAEAARMAREAGAEGDEVATVIRKALQAALR.

This sequence belongs to the RuvA family. As to quaternary structure, homotetramer. Forms an RuvA(8)-RuvB(12)-Holliday junction (HJ) complex. HJ DNA is sandwiched between 2 RuvA tetramers; dsDNA enters through RuvA and exits via RuvB. An RuvB hexamer assembles on each DNA strand where it exits the tetramer. Each RuvB hexamer is contacted by two RuvA subunits (via domain III) on 2 adjacent RuvB subunits; this complex drives branch migration. In the full resolvosome a probable DNA-RuvA(4)-RuvB(12)-RuvC(2) complex forms which resolves the HJ.

It localises to the cytoplasm. Functionally, the RuvA-RuvB-RuvC complex processes Holliday junction (HJ) DNA during genetic recombination and DNA repair, while the RuvA-RuvB complex plays an important role in the rescue of blocked DNA replication forks via replication fork reversal (RFR). RuvA specifically binds to HJ cruciform DNA, conferring on it an open structure. The RuvB hexamer acts as an ATP-dependent pump, pulling dsDNA into and through the RuvAB complex. HJ branch migration allows RuvC to scan DNA until it finds its consensus sequence, where it cleaves and resolves the cruciform DNA. This chain is Holliday junction branch migration complex subunit RuvA, found in Xanthomonas campestris pv. campestris (strain 8004).